The chain runs to 306 residues: NAD kinase 1 (306 aa).

The active-site Proton acceptor is aspartate 67. NAD(+) contacts are provided by residues 67–68 (DG), 149–150 (ND), and aspartate 181.

This sequence belongs to the NAD kinase family. Requires a divalent metal cation as cofactor.

It is found in the cytoplasm. The enzyme catalyses NAD(+) + ATP = ADP + NADP(+) + H(+). Its function is as follows. Involved in the regulation of the intracellular balance of NAD and NADP, and is a key enzyme in the biosynthesis of NADP. Catalyzes specifically the phosphorylation on 2'-hydroxyl of the adenosine moiety of NAD to yield NADP. The sequence is that of NAD kinase 1 from Synechococcus sp. (strain ATCC 27144 / PCC 6301 / SAUG 1402/1) (Anacystis nidulans).